A 178-amino-acid chain; its full sequence is Cell wall-binding protein YwsB (178 aa).

Residues 1–30 form the signal peptide; the sequence is MNKPTKLFSTLALAAGMTAAAAGGAGTIHA. SH3b domains lie at 47 to 111 and 116 to 178; these read IDSY…VKAA and TKTK…HMTK.

Its subcellular location is the secreted. The protein resides in the cell wall. Increases in stationary phase in a strain lacking the WprA protease. This is Cell wall-binding protein YwsB (ywsB) from Bacillus subtilis (strain 168).